The sequence spans 601 residues: DnaJ-like protein MG200 (601 aa).

Positions 5 to 77 constitute a J domain; the sequence is KRDYYEVLGI…DKYGFDGVDG (73 aa). Disordered regions lie at residues 143–163 and 205–272; these read VQQN…VPGE and VDSE…EPIP. Basic and acidic residues predominate over residues 151–160; it reads KDPDELRSKV. Residues 263–272 are compositionally biased toward pro residues; the sequence is EPTPIPEPIP.

The protein is DnaJ-like protein MG200 of Mycoplasma genitalium (strain ATCC 33530 / DSM 19775 / NCTC 10195 / G37) (Mycoplasmoides genitalium).